Reading from the N-terminus, the 391-residue chain is Thioredoxin-interacting protein (391 aa).

Residue Lys-212 forms a Glycyl lysine isopeptide (Lys-Gly) (interchain with G-Cter in ubiquitin) linkage. Ser-361 carries the post-translational modification Phosphoserine.

The protein belongs to the arrestin family. Homodimer; disulfide-linked. Interacts with TXN/thioredoxin through its redox-active site. Interacts with transcriptional repressors ZBTB16, ZBTB32 and HDAC1. Interacts with DDIT4. In terms of processing, ubiquitinated; undergoes heterotypic 'Lys-48'-/'Lys-63'-branched polyubiquitination catalyzed by ITCH and UBR5 resulting in proteasomal degradation. Deubiquitinated by USP5, leading to TXNIP stabilization.

It is found in the cytoplasm. Its function is as follows. May act as an oxidative stress mediator by inhibiting thioredoxin activity or by limiting its bioavailability. Interacts with COPS5 and restores COPS5-induced suppression of CDKN1B stability, blocking the COPS5-mediated translocation of CDKN1B from the nucleus to the cytoplasm. Functions as a transcriptional repressor, possibly by acting as a bridge molecule between transcription factors and corepressor complexes, and over-expression will induce G0/G1 cell cycle arrest. Required for the maturation of natural killer cells. Acts as a suppressor of tumor cell growth. Inhibits the proteasomal degradation of DDIT4, and thereby contributes to the inhibition of the mammalian target of rapamycin complex 1 (mTORC1). This is Thioredoxin-interacting protein (TXNIP) from Pongo abelii (Sumatran orangutan).